The primary structure comprises 149 residues: Large ribosomal subunit protein bL9 (149 aa).

The protein belongs to the bacterial ribosomal protein bL9 family.

Functionally, binds to the 23S rRNA. The sequence is that of Large ribosomal subunit protein bL9 from Thermotoga sp. (strain RQ2).